Reading from the N-terminus, the 161-residue chain is Mediator of RNA polymerase II transcription subunit 31 (161 aa).

The tract at residues 124–161 (GTGVDEQGAQDTQEGEGEQKQNKEEDAQDAQENTESKT) is disordered.

Belongs to the Mediator complex subunit 31 family. Component of the Mediator complex.

It is found in the nucleus. Its function is as follows. Component of the Mediator complex, a coactivator involved in the regulated transcription of nearly all RNA polymerase II-dependent genes. Mediator functions as a bridge to convey information from gene-specific regulatory proteins to the basal RNA polymerase II transcription machinery. Mediator is recruited to promoters by direct interactions with regulatory proteins and serves as a scaffold for the assembly of a functional preinitiation complex with RNA polymerase II and the general transcription factors. The chain is Mediator of RNA polymerase II transcription subunit 31 (soh1) from Aspergillus clavatus (strain ATCC 1007 / CBS 513.65 / DSM 816 / NCTC 3887 / NRRL 1 / QM 1276 / 107).